A 1103-amino-acid chain; its full sequence is Activity-dependent neuroprotector homeobox protein (1103 aa).

Residues Lys-39 and Lys-72 each participate in a glycyl lysine isopeptide (Lys-Gly) (interchain with G-Cter in SUMO2) cross-link. A C2H2-type 1; degenerate zinc finger spans residues 74 to 97 (FCCSACPFSSKFFSAYKSHFRNVH). At Ser-98 the chain carries Phosphoserine. The segment at 107–129 (LNCPYCTFNADKKTLETHIKIFH) adopts a C2H2-type 2; degenerate zinc-finger fold. Residues 133-154 (SSAPSSSLSTFKDKNKNDGLKP) form a disordered region. Residues 143–154 (FKDKNKNDGLKP) are compositionally biased toward basic and acidic residues. Glycyl lysine isopeptide (Lys-Gly) (interchain with G-Cter in SUMO2) cross-links involve residues Lys-144 and Lys-155. The C2H2-type 3; degenerate zinc finger occupies 165–188 (YYCKKCTYRDPLYEIVRKHIYREH). Glycyl lysine isopeptide (Lys-Gly) (interchain with G-Cter in SUMO2) cross-links involve residues Lys-203, Lys-231, Lys-266, Lys-274, Lys-278, Lys-279, Lys-311, and Lys-335. The C2H2-type 4; degenerate zinc-finger motif lies at 221 to 244 (IHCKRCLFMPKSYEALVQHVIEDH). An Asymmetric dimethylarginine modification is found at Arg-348. The interval 354 to 361 (NAPVSIPQ) is neuroprotective peptide (NAP). Residues 360–439 (PQQSQSVKQL…PAATGPPPSN (80 aa)) form a disordered region. Residues Lys-367 and Lys-408 each participate in a glycyl lysine isopeptide (Lys-Gly) (interchain with G-Cter in SUMO2) cross-link. Residues 393-423 (SLQTANTSSLPPGQVKSPSVSQSQASRVLGQ) show a composition bias toward polar residues. A phosphoserine mark is found at Ser-409 and Ser-413. Lys-427 participates in a covalent cross-link: Glycyl lysine isopeptide (Lys-Gly) (interchain with G-Cter in SUMO2). Positions 427–438 (KPPPAATGPPPS) are enriched in pro residues. The C2H2-type 5; atypical zinc finger occupies 447 to 469 (KICTICNELFPENVYSVHFEKEH). 2 consecutive C2H2-type zinc fingers follow at residues 489–510 (SKCL…MLIH) and 512–535 (LSCP…RMVH). Residues Lys-600 and Lys-606 each participate in a glycyl lysine isopeptide (Lys-Gly) (interchain with G-Cter in SUMO2) cross-link. Ser-608 carries the post-translational modification Phosphoserine. Glycyl lysine isopeptide (Lys-Gly) (interchain with G-Cter in SUMO2) cross-links involve residues Lys-616, Lys-621, Lys-632, and Lys-658. The segment at 622 to 647 (TLCPLCFSILKGPISDALAHHLRERH) adopts a C2H2-type 8; atypical zinc-finger fold. The segment at 662–686 (YKCIHCLGVYTSNMTASTITLHLVH) adopts a C2H2-type 9; atypical zinc-finger fold. Residues 691 to 712 (GKTQNGQDKTNAPSRLNQSPGL) are disordered. Residues 692–710 (KTQNGQDKTNAPSRLNQSP) are compositionally biased toward polar residues. A Glycyl lysine isopeptide (Lys-Gly) (interchain with G-Cter in SUMO2) cross-link involves residue Lys-699. At Ser-709 the chain carries Phosphoserine. Residues Lys-716, Lys-728, and Lys-731 each participate in a glycyl lysine isopeptide (Lys-Gly) (interchain with G-Cter in SUMO2) cross-link. Ser-738 is subject to Phosphoserine. Lys-745 participates in a covalent cross-link: Glycyl lysine isopeptide (Lys-Gly) (interchain with G-Cter in SUMO2). The segment at residues 754-814 (LDPKGHEDDS…SNKRKKCVRD (61 aa)) is a DNA-binding region (homeobox). At Ser-805 the chain carries Phosphoserine. Glycyl lysine isopeptide (Lys-Gly) (interchain with G-Cter in SUMO2) cross-links involve residues Lys-807, Lys-829, and Lys-835. Positions 873-1029 (DSFSDSFEHL…VQDDTEQLKW (157 aa)) are disordered. A phosphoserine mark is found at Ser-876, Ser-878, Ser-886, Ser-889, and Ser-905. Glycyl lysine isopeptide (Lys-Gly) (interchain with G-Cter in SUMO2) cross-links involve residues Lys-914, Lys-929, and Lys-936. The span at 922-954 (ESEKLDQKEEEDGSKYETIHLTEERAKLMHDAS) shows a compositional bias: basic and acidic residues. 2 positions are modified to phosphoserine: Ser-954 and Ser-956. The segment covering 972–982 (PSESGPGSRQV) has biased composition (polar residues). Lys-1017 is covalently cross-linked (Glycyl lysine isopeptide (Lys-Gly) (interchain with G-Cter in SUMO2)). Residues Lys-1036 and Lys-1043 each carry the N6-acetyllysine; alternate modification. Residues Lys-1036 and Lys-1043 each participate in a glycyl lysine isopeptide (Lys-Gly) (interchain with G-Cter in SUMO2); alternate cross-link. The interval 1045 to 1103 (QSQWENASENAERLPNPQIEWQNSTIDSEDGEQFDSMTDGVADPMHGSLTGVKLSSQQA) is disordered. A Phosphoserine modification is found at Ser-1072.

As to quaternary structure, interacts (via N-terminal region) with beta-catenin/CTNNB1 (via the central armadillo domains); interaction is direct and stabilizes CTNNB1 by modulating its phosphorylation by glycogen synthase kinase-3 beta GSK3B.

Its subcellular location is the nucleus. The protein localises to the chromosome. In terms of biological role, may be involved in transcriptional regulation. May mediate some of the neuroprotective peptide VIP-associated effects involving normal growth and cancer proliferation. Positively modulates WNT-beta-catenin/CTNN1B signaling, acting by regulating phosphorylation of, and thereby stabilizing, CTNNB1. May be required for neural induction and neuronal differentiation. May be involved in erythroid differentiation. The protein is Activity-dependent neuroprotector homeobox protein (Adnp) of Rattus norvegicus (Rat).